The following is a 635-amino-acid chain: Cationic amino acid transporter 4 (635 aa).

3 helical membrane passes run 42–62 (LTLLGVGGMVGSGLYVLTGAV), 66–86 (VAGPAVLLSFGVAAVASLLAA), and 113–133 (LWAFLIGWNVLLEYIIGGAAV). N-linked (GlcNAc...) asparagine glycosylation is found at asparagine 151 and asparagine 195. The helical transmembrane segment at 197–217 (TFSAISLLVILFIVILGFILA) threads the bilayer. The N-linked (GlcNAc...) asparagine glycan is linked to asparagine 221. Transmembrane regions (helical) follow at residues 229–249 (FAPFGFSGVMAGTASCFYAFV), 270–290 (LAIAISLAIAAGAYILVSTVL), 318–338 (GFIVAAGSICAMNTVLLSLLF), 365–385 (QVPVAGTLAFGLLTAFLALLL), and 391–411 (VQFLSLGTLLAYTFVATSIIV). 2 positions are modified to phosphoserine: serine 422 and serine 427. The helical transmembrane segment at 478–498 (VTWALGVMLASAITIGCVLVF) threads the bilayer. Residue asparagine 500 is glycosylated (N-linked (GlcNAc...) asparagine). The next 3 membrane-spanning stretches (helical) occupy residues 508–528 (WGYILLLLLTSVMFLLSLLVL), 539–559 (LFQIPMVPLIPALSIVLNICL), and 567–587 (TWVRFSIWLLMGLAVYFGYGI). Residue asparagine 601 is glycosylated (N-linked (GlcNAc...) asparagine).

This sequence belongs to the amino acid-polyamine-organocation (APC) superfamily. Cationic amino acid transporter (CAT) (TC 2.A.3.3) family.

Its subcellular location is the membrane. Its function is as follows. Involved in the transport of the cationic amino acids (arginine, lysine and ornithine). In Homo sapiens (Human), this protein is Cationic amino acid transporter 4 (SLC7A4).